A 976-amino-acid polypeptide reads, in one-letter code: Dibasic-processing endoprotease (976 aa).

The signal sequence occupies residues 1–17 (MLRKFILGLLLASQAVA). N-linked (GlcNAc...) asparagine glycosylation occurs at asparagine 156. Basic and acidic residues predominate over residues 172-212 (AEEAQKAQDDKGDKKEDQKDDKKEGQEAQKEGDKEDNKGDD). A disordered region spans residues 172–246 (AEEAQKAQDD…VQWKPVDESM (75 aa)). A compositionally biased stretch (acidic residues) spans 213-231 (KEDGEEDDDDDEDEDDDDA). The 319-residue stretch at 277–595 (QWYLHNVHKA…YGKLDASKIV (319 aa)) folds into the Peptidase S8 domain. N-linked (GlcNAc...) asparagine glycosylation is found at asparagine 291 and asparagine 299. The active-site Charge relay system is the aspartate 311. Asparagine 336 is a glycosylation site (N-linked (GlcNAc...) asparagine). Catalysis depends on charge relay system residues histidine 349 and serine 528. Residues 524–544 (HGGTSAAAPLAAGVFALALSV) traverse the membrane as a helical segment. The region spanning 604 to 737 (VNNQTSFHSE…QLNVFGEQKD (134 aa)) is the P/Homo B domain. Residue asparagine 606 is glycosylated (N-linked (GlcNAc...) asparagine). Positions 733 to 848 (GEQKDKREEN…SDSHTSWWPD (116 aa)) are disordered. Residues 734-830 (EQKDKREENK…EEKPEEKPVD (97 aa)) are compositionally biased toward basic and acidic residues. The helical transmembrane segment at 855-875 (AWLYGAVLLVGGFIAVIGIYA) threads the bilayer. An N-linked (GlcNAc...) asparagine glycan is attached at asparagine 886. The tract at residues 914–976 (PEDTHRRSGD…RDNDRQNLLG (63 aa)) is disordered. 2 stretches are compositionally biased toward basic and acidic residues: residues 915-928 (EDTH…DRLY) and 940-976 (MFRI…NLLG).

This sequence belongs to the peptidase S8 family. Furin subfamily.

It is found in the membrane. The chain is Dibasic-processing endoprotease (XPR6) from Yarrowia lipolytica (strain CLIB 122 / E 150) (Yeast).